Here is a 299-residue protein sequence, read N- to C-terminus: MTLYDVPAPAKLNLFLHVVGRRADGYHLLQTAFRFIDLADTLHFEARADGAIGRAYELPGVAESDDLVVRAARSLQRATGTRQGAQIGLHKRIPQGGGLGGGSSDAATTLIALNRLWGTGLSRSQLMQLALPLGADVPVFVFGQSAFAQGVGEDLTAVALPPAAYLVVQPDAGVPTAAIFSDPDLTRDCASVTIADFLALLTSCFGRNDLEPVVLRRYPEVSGAVRWLFEHGLRVRMSGSGACLFAEFPTLPEAVLAQEEITATMRVAGKTTSHTHPGFRLVQASTGLTEHPLRNWIAS.

Lys11 is a catalytic residue. Pro94 to Ser104 is an ATP binding site. Residue Asp136 is part of the active site.

This sequence belongs to the GHMP kinase family. IspE subfamily.

The enzyme catalyses 4-CDP-2-C-methyl-D-erythritol + ATP = 4-CDP-2-C-methyl-D-erythritol 2-phosphate + ADP + H(+). The protein operates within isoprenoid biosynthesis; isopentenyl diphosphate biosynthesis via DXP pathway; isopentenyl diphosphate from 1-deoxy-D-xylulose 5-phosphate: step 3/6. Its function is as follows. Catalyzes the phosphorylation of the position 2 hydroxy group of 4-diphosphocytidyl-2C-methyl-D-erythritol. The chain is 4-diphosphocytidyl-2-C-methyl-D-erythritol kinase from Bordetella parapertussis (strain 12822 / ATCC BAA-587 / NCTC 13253).